A 142-amino-acid chain; its full sequence is Hemoglobin subunit alpha-1 (142 aa).

The Globin domain maps to 2–142 (KLSADDKHNV…VGYVLASKYR (141 aa)). H59 is an O2 binding site. A heme b-binding site is contributed by H88.

This sequence belongs to the globin family. In terms of assembly, major hemoglobin is a heterotetramer of two alpha-1 chains and two beta-1 chains. As to expression, red blood cells.

Involved in oxygen transport from the lung to the various peripheral tissues. This chain is Hemoglobin subunit alpha-1, found in Triturus cristatus (Great crested newt).